A 739-amino-acid polypeptide reads, in one-letter code: Catalase-peroxidase (739 aa).

A signal peptide spans 1–23; it reads MLKKIVTALGMSGMLLAANSAIA. Residues 100-221 constitute a cross-link (tryptophyl-tyrosyl-methioninium (Trp-Tyr) (with M-247)); that stretch reads WHDAGTYRLA…YAATQMGLIY (122 aa). H101 acts as the Proton acceptor in catalysis. The segment at residues 221–247 is a cross-link (tryptophyl-tyrosyl-methioninium (Tyr-Met) (with W-100)); it reads YVNPEGPDGKPDIKGAASEIRQAFRAM. H262 contacts heme b.

It belongs to the peroxidase family. Peroxidase/catalase subfamily. As to quaternary structure, homodimer or homotetramer. Heme b serves as cofactor. Post-translationally, formation of the three residue Trp-Tyr-Met cross-link is important for the catalase, but not the peroxidase activity of the enzyme.

It carries out the reaction H2O2 + AH2 = A + 2 H2O. The catalysed reaction is 2 H2O2 = O2 + 2 H2O. In terms of biological role, bifunctional enzyme with both catalase and broad-spectrum peroxidase activity. In Francisella philomiragia subsp. philomiragia (strain ATCC 25017 / CCUG 19701 / FSC 153 / O#319-036), this protein is Catalase-peroxidase.